We begin with the raw amino-acid sequence, 343 residues long: MSAFTPASEVLLRHSDDFEQSRILFAGDLQDDLPARLDTAASRAHTQQFHHWQVLSRQMGDNARFSLVATADDVADCNTLIYYWPKNKPEAQFQLMNLLSLLPVGTDIFVVGENRSGVRSAEQMLADYAPLNKVDSARRCGLYFGRLEKQPEFDADKFWGEYSVDGLTVKTLPGVFSRDGLDVGSQLLLSTLTPHTKGKVLDVGCGAGVLSVAFARHSPKIRLTLCDVSAPAVEASRATLAANGVEGEVFASNVFSEVKGRFDMIISNPPFHDGMQTSLDAAQTLIRGAVRHLNSGGELRIVANAFLPYPDVLDETFGFHEVIAQTGRFKVYRAIMTRQAKKG.

It belongs to the methyltransferase superfamily. RsmC family. Monomer.

Its subcellular location is the cytoplasm. The catalysed reaction is guanosine(1207) in 16S rRNA + S-adenosyl-L-methionine = N(2)-methylguanosine(1207) in 16S rRNA + S-adenosyl-L-homocysteine + H(+). Specifically methylates the guanine in position 1207 of 16S rRNA in the 30S particle. The protein is Ribosomal RNA small subunit methyltransferase C of Escherichia coli O17:K52:H18 (strain UMN026 / ExPEC).